Reading from the N-terminus, the 102-residue chain is Small ribosomal subunit protein uS10 (102 aa).

It belongs to the universal ribosomal protein uS10 family. Part of the 30S ribosomal subunit.

In terms of biological role, involved in the binding of tRNA to the ribosomes. The polypeptide is Small ribosomal subunit protein uS10 (Cenarchaeum symbiosum (strain A)).